Reading from the N-terminus, the 308-residue chain is tRNA dimethylallyltransferase (308 aa).

ATP is bound at residue 11 to 18 (GSTATGKS). 13 to 18 (TATGKS) provides a ligand contact to substrate. The interaction with substrate tRNA stretch occupies residues 36–39 (DSVQ).

It belongs to the IPP transferase family. Monomer. The cofactor is Mg(2+).

The enzyme catalyses adenosine(37) in tRNA + dimethylallyl diphosphate = N(6)-dimethylallyladenosine(37) in tRNA + diphosphate. In terms of biological role, catalyzes the transfer of a dimethylallyl group onto the adenine at position 37 in tRNAs that read codons beginning with uridine, leading to the formation of N6-(dimethylallyl)adenosine (i(6)A). This Bdellovibrio bacteriovorus (strain ATCC 15356 / DSM 50701 / NCIMB 9529 / HD100) protein is tRNA dimethylallyltransferase.